A 596-amino-acid polypeptide reads, in one-letter code: Adenine deaminase (596 aa).

This sequence belongs to the metallo-dependent hydrolases superfamily. Adenine deaminase family. Mn(2+) serves as cofactor.

It carries out the reaction adenine + H2O + H(+) = hypoxanthine + NH4(+). The chain is Adenine deaminase from Moorella thermoacetica (strain ATCC 39073 / JCM 9320).